A 704-amino-acid polypeptide reads, in one-letter code: Fibulin-1 (704 aa).

The signal sequence occupies residues 1–25; that stretch reads MDKLRGARPLRLLLLLLALLPALRG. 35 disulfide bridges follow: Cys33-Cys59, Cys34-Cys66, Cys47-Cys67, Cys76-Cys107, Cys89-Cys108, Cys110-Cys134, Cys111-Cys141, Cys124-Cys142, Cys181-Cys191, Cys187-Cys200, Cys202-Cys215, Cys221-Cys234, Cys228-Cys243, Cys249-Cys261, Cys267-Cys280, Cys274-Cys289, Cys295-Cys307, Cys313-Cys326, Cys320-Cys335, Cys342-Cys355, Cys361-Cys374, Cys368-Cys383, Cys385-Cys398, Cys404-Cys416, Cys412-Cys425, Cys427-Cys440, Cys446-Cys455, Cys451-Cys464, Cys466-Cys480, Cys486-Cys499, Cys495-Cys508, Cys510-Cys524, Cys530-Cys543, Cys537-Cys552, and Cys557-Cys578. Anaphylatoxin-like domains are found at residues 33 to 74, 75 to 109, and 110 to 142; these read CCDK…LEEH, YCSD…KCCY, and CCLL…RACC. N-linked (GlcNAc...) asparagine glycosylation occurs at Asn96. The EGF-like 1 domain occupies 177–216; that stretch reads LHDGCRGGGPCSQQCRDTGSSYVCSCFVGYQLQPDGVNCE. Residues 217-262 enclose the EGF-like 2; calcium-binding domain; that stretch reads DINECITGTHSCGIGQTCVNTLGSFRCQRDTSCGTGYELTDDSRCK. In terms of domain architecture, EGF-like 3; calcium-binding spans 263–308; sequence DIDECETGTHNCPPDFICQNTPGSFRCRPKLQCMNGFIQDALGNCI. The 48-residue stretch at 309–356 folds into the EGF-like 4; calcium-binding domain; it reads DINECLSTNMPCPAGQICINTDGSYTCQRISPSCGRGYHLNEDGTRCV. The EGF-like 5; calcium-binding domain occupies 357–399; the sequence is DVDECSSSDQPCGEGHVCINGPGNYRCECKSGYSFDVISRTCI. Positions 357-441 are self-association and FN1-binding; it reads DVDECSSSDQ…KLSSDGRSCE (85 aa). One can recognise an EGF-like 6; calcium-binding domain in the interval 400–441; that stretch reads DINECRRYPGRLCAHKCENTPGSYYCTCTMGFKLSSDGRSCE. The region spanning 442–481 is the EGF-like 7; calcium-binding domain; it reads DLNECESSPCSQECANVYGSYQCYCRRGFQLSDIDGISCE. The 44-residue stretch at 482–525 folds into the EGF-like 8; calcium-binding domain; the sequence is DIDECALPTGGHICSFRCINIPGSFQCTCPSTGYRLAPNARNCQ. An EGF-like 9; calcium-binding domain is found at 526–579; it reads DIDECVAETHNCSFNETCFNIQGGFRCLSLECPENYRKSGDTVRLEKTDTIRCI. 2 N-linked (GlcNAc...) asparagine glycosylation sites follow: Asn536 and Asn540.

It belongs to the fibulin family. In terms of assembly, homomultimerizes and interacts with various extracellular matrix components.

It is found in the secreted. The protein resides in the extracellular space. Its subcellular location is the extracellular matrix. Functionally, incorporated into fibronectin-containing matrix fibers. May play a role in cell adhesion and migration along protein fibers within the extracellular matrix (ECM). Could be important for certain developmental processes and contribute to the supramolecular organization of ECM architecture, in particular to those of basement membranes. This chain is Fibulin-1 (FBLN1), found in Gallus gallus (Chicken).